The chain runs to 974 residues: Toxin subunit YenC1 (974 aa).

9 RHS repeats span residues 165–179 (AGQCLRHYNSAGLNQ), 290–304 (GVLTTYSYEAETQRL), 322–336 (FQDLRYTYDPVGNVL), 354–368 (VPENTYIYDTLYQLV), 398–412 (NYIRNYHYDSAGNLM), 490–504 (SDSETYRYDANSQRV), 570–584 (NDELRYSYDNLIGSS), 596–610 (SQEEYYPYGGTAVWM), and 630–644 (DATGLYYYGFRYYQP). Residues 600 to 680 (YYPYGGTAVW…PIVLHDPDGL (81 aa)) form an RHS-repeat associated core domain region. Positions 699–940 (ISSLKGTGPF…GEVSASTLLE (242 aa)) are cytotoxic necrotising factor domain.

This sequence belongs to the RHS family. Semipurified toxin complex consists of at least YenA1-YenA2-YenB-YenC1-YenC2-Chi1-Chi2. The Yen-TC:K9 subcomplex is about 26 nm tall and 22 nm in diameter with 5-fold symmetry and 5 copies of YenA1, YenA2, Chi1 and Chi2; the chitinase subunits may be solvent accessible on the exterior the complex. The Yen-TC:K9 subcomplex has no insecticidal activity. The native complex with additional YenB, YenC1 and YenC2 subunits is 16 nm taller and is insecticidal; the toxicity-conferring subunits are present at about 1 copy each.

It localises to the secreted. Its activity is regulated as follows. Toxin complex is secreted when grown at 25 degrees Celsius or less; at higher temperatures the proteins are present intracellularly but not secreted. Part of an orally active toxin complex (TC) with strong insecticidal effects on larvae of the Coleoptera Costelytra zealandica, Acrossidius tasmania and Adoryphorus couloni and some Lepidoptera larvae. The TC has an endochitinase activity. The chain is Toxin subunit YenC1 from Yersinia entomophaga.